We begin with the raw amino-acid sequence, 593 residues long: MESGNVVNAQPELSGIIDGSKSYVYEQLWKLCAGPLCDIPKLGEKVYYFPQGHIELVETSTREELNELQPICDLPSKLQCRVIAIHLKVENNSDETYAEITLMPDTTQVVIPTQNENQFRPLVNSFTKVLTASDTSAHGGFFVPKKHAIECLPSLDMSQPLPAQELLAIDLHGNQWRFNHNYRGTPQRHLLTTGWNAFTTSKKLVAGDVIVFVRGETGELRVGIRRARHQQGNIPSSIVSIDCMRHGVVASAKHAFDNQCMFTVVYKPRSSKFIVSYDKFLDAVNNKFNVGSRFTMRLEGDDFSERRCFGTIIGVSDFSPHWKCSEWRSLEVQWDEFTSFPGPKKVSPWDIEHLMPAINVPRSFLLKNKRLREVNEIGSSSSHLLPPILTQGQENEQLSVASPMNISLRYRDATEDAMNPSKLLMSYPVQPMPKLNYNNQMVTEMEENITTKTGTNFRLFGVTLDTPPVIKDPIEEIGSEISKLTEGKKFGLSQTLRSPTEIQNKQFSSSRTCTKVQMQGVTIGRAVDLSVLNGYDQLILELEKLFDIKGQLQTRNQWEIAFTDSDEDKMLVGDDPWPEFCNMVKKIFIQKRR.

A DNA-binding region (TF-B3) is located at residues 126–228 (FTKVLTASDT…ELRVGIRRAR (103 aa)). The PB1 domain occupies 511–592 (RTCTKVQMQG…MVKKIFIQKR (82 aa)).

This sequence belongs to the ARF family. In terms of assembly, homodimers and heterodimers.

It is found in the nucleus. Its function is as follows. Auxin response factors (ARFs) are transcriptional factors that bind specifically to the DNA sequence 5'-TGTCTC-3' found in the auxin-responsive promoter elements (AuxREs). Could act as transcriptional activator or repressor. Formation of heterodimers with Aux/IAA proteins may alter their ability to modulate early auxin response genes expression. This Arabidopsis thaliana (Mouse-ear cress) protein is Auxin response factor 12 (ARF12).